A 388-amino-acid polypeptide reads, in one-letter code: ATP phosphoribosyltransferase regulatory subunit (388 aa).

The protein belongs to the class-II aminoacyl-tRNA synthetase family. HisZ subfamily. As to quaternary structure, heteromultimer composed of HisG and HisZ subunits.

It localises to the cytoplasm. It functions in the pathway amino-acid biosynthesis; L-histidine biosynthesis; L-histidine from 5-phospho-alpha-D-ribose 1-diphosphate: step 1/9. Functionally, required for the first step of histidine biosynthesis. May allow the feedback regulation of ATP phosphoribosyltransferase activity by histidine. The polypeptide is ATP phosphoribosyltransferase regulatory subunit (Acinetobacter baylyi (strain ATCC 33305 / BD413 / ADP1)).